The chain runs to 231 residues: NADH-ubiquinone oxidoreductase chain 4 (231 aa).

6 consecutive transmembrane segments (helical) span residues 1–21 (PIAG…YGII), 34–54 (TFLP…LTCL), 61–80 (SLIA…AIII), 84–106 (WGLS…LFCL), 118–138 (ILIL…WWLL), and 156–178 (LLIM…LSML).

The protein belongs to the complex I subunit 4 family.

The protein localises to the mitochondrion membrane. The enzyme catalyses a ubiquinone + NADH + 5 H(+)(in) = a ubiquinol + NAD(+) + 4 H(+)(out). Its function is as follows. Core subunit of the mitochondrial membrane respiratory chain NADH dehydrogenase (Complex I) that is believed to belong to the minimal assembly required for catalysis. Complex I functions in the transfer of electrons from NADH to the respiratory chain. The immediate electron acceptor for the enzyme is believed to be ubiquinone. The chain is NADH-ubiquinone oxidoreductase chain 4 (MT-ND4) from Trimeresurus albolabris (White-lipped pit viper).